Reading from the N-terminus, the 1188-residue chain is DNA-directed RNA polymerase subunit beta (1188 aa).

This sequence belongs to the RNA polymerase beta chain family. In terms of assembly, the RNAP catalytic core consists of 2 alpha, 1 beta, 1 beta' and 1 omega subunit. When a sigma factor is associated with the core the holoenzyme is formed, which can initiate transcription.

The enzyme catalyses RNA(n) + a ribonucleoside 5'-triphosphate = RNA(n+1) + diphosphate. Functionally, DNA-dependent RNA polymerase catalyzes the transcription of DNA into RNA using the four ribonucleoside triphosphates as substrates. In Streptococcus pyogenes serotype M1, this protein is DNA-directed RNA polymerase subunit beta.